A 458-amino-acid chain; its full sequence is Divalent metal cation transporter MntH (458 aa).

Helical transmembrane passes span 38 to 58, 86 to 106, 119 to 139, 151 to 171, 180 to 200, 223 to 243, 275 to 295, 315 to 335, 370 to 390, 395 to 415, and 436 to 456; these read GFWK…VGYM, LIAM…GMDL, GIFL…AEII, IPLL…LLLM, AIVA…VILA, MLFL…LYLH, LTIA…MFYG, IVGS…LLAS, GLSI…EAQV, IYSQ…LTLF, and WFVT…TVGL.

The protein belongs to the NRAMP family.

It is found in the cell membrane. Its function is as follows. H(+)-stimulated, divalent metal cation uptake system. The protein is Divalent metal cation transporter MntH of Latilactobacillus sakei subsp. sakei (strain 23K) (Lactobacillus sakei subsp. sakei).